Here is a 427-residue protein sequence, read N- to C-terminus: Enolase (427 aa).

Glutamine 163 serves as a coordination point for (2R)-2-phosphoglycerate. Catalysis depends on glutamate 205, which acts as the Proton donor. The Mg(2+) site is built by aspartate 242, glutamate 285, and aspartate 312. Residues lysine 337, arginine 366, serine 367, and lysine 388 each contribute to the (2R)-2-phosphoglycerate site. The Proton acceptor role is filled by lysine 337.

Belongs to the enolase family. Mg(2+) is required as a cofactor.

It is found in the cytoplasm. The protein resides in the secreted. The protein localises to the cell surface. The catalysed reaction is (2R)-2-phosphoglycerate = phosphoenolpyruvate + H2O. It participates in carbohydrate degradation; glycolysis; pyruvate from D-glyceraldehyde 3-phosphate: step 4/5. Functionally, catalyzes the reversible conversion of 2-phosphoglycerate (2-PG) into phosphoenolpyruvate (PEP). It is essential for the degradation of carbohydrates via glycolysis. The sequence is that of Enolase from Bradyrhizobium sp. (strain BTAi1 / ATCC BAA-1182).